Reading from the N-terminus, the 255-residue chain is PHD finger protein ALFIN-LIKE 4 (255 aa).

Met-1 carries the N-acetylmethionine modification. The segment at 145-200 is disordered; that stretch reads GKDKSSVSNNSSNRSKSSSKRGSESRAKFSKPEPKDDEEEEEEGVEEEDEDEQGET. Residues 150-160 are compositionally biased toward low complexity; that stretch reads SVSNNSSNRSK. The segment covering 165 to 178 has biased composition (basic and acidic residues); sequence RGSESRAKFSKPEP. Residues 179–198 show a composition bias toward acidic residues; sequence KDDEEEEEEGVEEEDEDEQG. The segment at 199 to 251 adopts a PHD-type zinc-finger fold; the sequence is ETQCGACGESYAADEFWICCDLCEMWFHGKCVKITPARAEHIKQYKCPSCSNK.

This sequence belongs to the Alfin family. In terms of assembly, interacts with H3K4me3 and to a lesser extent with H3K4me2. Ubiquitously expressed.

Its subcellular location is the nucleus. In terms of biological role, histone-binding component that specifically recognizes H3 tails trimethylated on 'Lys-4' (H3K4me3), which mark transcription start sites of virtually all active genes. The polypeptide is PHD finger protein ALFIN-LIKE 4 (AL4) (Arabidopsis thaliana (Mouse-ear cress)).